The following is a 671-amino-acid chain: MNKITKKQKMSFAGLLIAIGIVYGDIGTSPLYVMKSIVTENGGIANVNRELIVGSISLILWTVTLLTTVKYVMIALKATNHGEGGIFSLYALVRKRAKWLVIPALIGGAALLADGTLTPAVTVTTSIEGLKNMRFGDVIPVPSQEVVIMITIIILVILFSIQRMGTSVIGKAFGPIMLIWFTFLGVVGIANLSHDWSLLEAINPIHAIRILVSPANKVGILILGSVFLATTGAEALYSDVGHVSKANIIGSWPYIFVCLSLNYLGQGAWILHNVSYHAGNGDFNPFFEVVPSNLRLFAIALATIAAIIASQALITGSFTLVAEASSLKFLPRMNIIYPSTEKGQIYIPLINKMICVVTVAIVFLFRTSHHMEAAYGLAITVTMLMTTILLFEYLGKKGKPLYLRVIFLIAFAFIEGMFLISSLTKFLHGGYVTVLIAGFILVIMYVWFYGNKIRDKREAKNAYVRLDEYTEMLTDLSHCEDYPVYATNVVYMAKVKYNKFIKREMLYSILDKRPKRAKAYWFVTVNVTNEPYTAEYAVNTYGTKNVINVQLYLGFRKQTSVNVYLRQIVHELIADGTIEAQPQRFTTTPGRDVGDFSFVIVNDVISPLTKLTGYEKFMVEARVWLQNLSSNPASWFGLEYADTVVERVPLILGKHQESYIKRIKPKKQTKK.

12 helical membrane-spanning segments follow: residues 12 to 32 (FAGLLIAIGIVYGDIGTSPLY), 56 to 76 (ISLILWTVTLLTTVKYVMIAL), 99 to 119 (WLVIPALIGGAALLADGTLTP), 139 to 159 (IPVPSQEVVIMITIIILVILF), 172 to 192 (AFGPIMLIWFTFLGVVGIANL), 218 to 238 (VGILILGSVFLATTGAEALYS), 251 to 271 (SWPYIFVCLSLNYLGQGAWIL), 296 to 316 (LFAIALATIAAIIASQALITG), 345 to 365 (IYIPLINKMICVVTVAIVFLF), 374 to 394 (AYGLAITVTMLMTTILLFEYL), 400 to 420 (PLYLRVIFLIAFAFIEGMFLI), and 429 to 449 (GGYVTVLIAGFILVIMYVWFY).

It belongs to the HAK/KUP transporter (TC 2.A.72) family.

It is found in the cell membrane. It catalyses the reaction K(+)(in) + H(+)(in) = K(+)(out) + H(+)(out). Functionally, transport of potassium into the cell. Likely operates as a K(+):H(+) symporter. The sequence is that of Probable potassium transport system protein Kup 2 from Lactobacillus acidophilus (strain ATCC 700396 / NCK56 / N2 / NCFM).